We begin with the raw amino-acid sequence, 367 residues long: UDP-N-acetylglucosamine--N-acetylmuramyl-(pentapeptide) pyrophosphoryl-undecaprenol N-acetylglucosamine transferase (367 aa).

UDP-N-acetyl-alpha-D-glucosamine-binding positions include 15-17, asparagine 127, arginine 163, serine 191, isoleucine 249, and glutamine 294; that span reads TGG.

Belongs to the glycosyltransferase 28 family. MurG subfamily.

It is found in the cell inner membrane. The catalysed reaction is di-trans,octa-cis-undecaprenyl diphospho-N-acetyl-alpha-D-muramoyl-L-alanyl-D-glutamyl-meso-2,6-diaminopimeloyl-D-alanyl-D-alanine + UDP-N-acetyl-alpha-D-glucosamine = di-trans,octa-cis-undecaprenyl diphospho-[N-acetyl-alpha-D-glucosaminyl-(1-&gt;4)]-N-acetyl-alpha-D-muramoyl-L-alanyl-D-glutamyl-meso-2,6-diaminopimeloyl-D-alanyl-D-alanine + UDP + H(+). Its pathway is cell wall biogenesis; peptidoglycan biosynthesis. Functionally, cell wall formation. Catalyzes the transfer of a GlcNAc subunit on undecaprenyl-pyrophosphoryl-MurNAc-pentapeptide (lipid intermediate I) to form undecaprenyl-pyrophosphoryl-MurNAc-(pentapeptide)GlcNAc (lipid intermediate II). The sequence is that of UDP-N-acetylglucosamine--N-acetylmuramyl-(pentapeptide) pyrophosphoryl-undecaprenol N-acetylglucosamine transferase from Burkholderia ambifaria (strain MC40-6).